A 466-amino-acid chain; its full sequence is Asparagine--tRNA ligase (466 aa).

This sequence belongs to the class-II aminoacyl-tRNA synthetase family. As to quaternary structure, homodimer.

The protein resides in the cytoplasm. It carries out the reaction tRNA(Asn) + L-asparagine + ATP = L-asparaginyl-tRNA(Asn) + AMP + diphosphate + H(+). The chain is Asparagine--tRNA ligase from Shewanella amazonensis (strain ATCC BAA-1098 / SB2B).